The following is a 113-amino-acid chain: uncharacterized protein (113 aa).

The N-terminal stretch at 1–20 (MMKKSILAFLLLTSSAAALA) is a signal peptide.

This is an uncharacterized protein from Escherichia coli (strain K12).